The chain runs to 240 residues: Large ribosomal subunit protein uL2 (240 aa).

The span at 1–11 (MGKRLISQNRG) shows a compositional bias: polar residues. Disordered regions lie at residues 1 to 28 (MGKR…KGAV) and 206 to 240 (GGGR…TGRK). Basic residues-rich tracts occupy residues 13-28 (GTPK…KGAV) and 224-240 (SPGR…TGRK).

The protein belongs to the universal ribosomal protein uL2 family. As to quaternary structure, part of the 50S ribosomal subunit. Forms a bridge to the 30S subunit in the 70S ribosome.

One of the primary rRNA binding proteins. Required for association of the 30S and 50S subunits to form the 70S ribosome, for tRNA binding and peptide bond formation. It has been suggested to have peptidyltransferase activity; this is somewhat controversial. Makes several contacts with the 16S rRNA in the 70S ribosome. In Methanococcus maripaludis (strain C5 / ATCC BAA-1333), this protein is Large ribosomal subunit protein uL2.